A 254-amino-acid polypeptide reads, in one-letter code: Countin-2 (254 aa).

The signal sequence occupies residues 1-19; sequence MMIKYITIAILFIASLVKA. One can recognise a Saposin B-type domain in the interval 22–107; that stretch reads QFSLCPTCVD…EELTVCPKNQ (86 aa). 3 disulfides stabilise this stretch: C26/C103, C29/C97, and C56/C68. N-linked (GlcNAc...) asparagine glycosylation is found at N110 and N219. The interval 231-254 is disordered; sequence QMTGTGSGSGSGSGSSSGAAYLRY. A compositionally biased stretch (gly residues) spans 233-245; that stretch reads TGTGSGSGSGSGS.

The protein belongs to the countin family.

The protein resides in the secreted. In terms of biological role, cell-counting factor that limits the minimum size of the multicellular structure. May up-regulate the expression of both gp24 and gp80, which mediate cell adhesion. The chain is Countin-2 (ctnB) from Dictyostelium discoideum (Social amoeba).